Reading from the N-terminus, the 591-residue chain is Heterogeneous nuclear ribonucleoprotein L-like (591 aa).

Residues 1-120 (MSSSSSSSPK…STEGGGSHHK (120 aa)) form a disordered region. A compositionally biased stretch (basic and acidic residues) spans 20 to 31 (FESQAKRLKTEE). Lys28 is covalently cross-linked (Glycyl lysine isopeptide (Lys-Gly) (interchain with G-Cter in SUMO2)). Position 37 is a phosphoserine (Ser37). Phosphothreonine is present on Thr48. Gly residues predominate over residues 57 to 73 (SGGGDGGDGDGGSGGGG). Residues 74 to 91 (DGEEGEGGEEGDEGDGDE) are compositionally biased toward acidic residues. The segment covering 92–105 (GGSGGDEGGSGGGP) has biased composition (gly residues). Phosphoserine is present on residues Ser107, Ser117, and Ser124. RRM domains lie at 125-199 (PVVH…YSTS), 215-293 (NKVL…YARP), and 384-458 (SVVM…VSKQ). Lys540 participates in a covalent cross-link: Glycyl lysine isopeptide (Lys-Gly) (interchain with G-Cter in SUMO2).

In terms of assembly, interacts with HNRNPL.

Its function is as follows. RNA-binding protein that functions as a regulator of alternative splicing for multiple target mRNAs, including PTPRC/CD45 and STAT5A. Required for alternative splicing of PTPRC. In Mus musculus (Mouse), this protein is Heterogeneous nuclear ribonucleoprotein L-like (Hnrnpll).